Consider the following 341-residue polypeptide: uncharacterized protein (341 aa).

4 WD repeats span residues 19–59, 106–145, 252–293, and 303–341; these read SLGS…QVHT, GHTD…RCLG, PFSN…HHKG, and VSQS…ALTS.

Its subcellular location is the cytoplasm. The protein resides in the nucleus. This is an uncharacterized protein from Schizosaccharomyces pombe (strain 972 / ATCC 24843) (Fission yeast).